A 90-amino-acid chain; its full sequence is Translation initiation factor IF-1 2 (90 aa).

Residues 1–72 (MAKEELLELD…TKGRINFRHK (72 aa)) form the S1-like domain.

It belongs to the IF-1 family. In terms of assembly, component of the 30S ribosomal translation pre-initiation complex which assembles on the 30S ribosome in the order IF-2 and IF-3, IF-1 and N-formylmethionyl-tRNA(fMet); mRNA recruitment can occur at any time during PIC assembly.

It is found in the cytoplasm. In terms of biological role, one of the essential components for the initiation of protein synthesis. Stabilizes the binding of IF-2 and IF-3 on the 30S subunit to which N-formylmethionyl-tRNA(fMet) subsequently binds. Helps modulate mRNA selection, yielding the 30S pre-initiation complex (PIC). Upon addition of the 50S ribosomal subunit IF-1, IF-2 and IF-3 are released leaving the mature 70S translation initiation complex. The protein is Translation initiation factor IF-1 2 of Paraburkholderia xenovorans (strain LB400).